A 411-amino-acid polypeptide reads, in one-letter code: 2-acylphloroglucinol 4-prenyltransferase, chloroplastic (411 aa).

The transit peptide at 1–91 (MELSSVSSFS…CNDQRGNSIR (91 aa)) directs the protein to the chloroplast. Transmembrane regions (helical) follow at residues 159-179 (LLGM…NQIF), 198-218 (ISVE…FILI), 226-246 (LLTS…VPPF), 253-273 (ITAF…VYYA), 278-298 (LGLA…ITFM), 333-353 (LLGT…AIIW), 356-376 (AFKS…LIFQ), and 391-411 (KSFY…YLFI).

Belongs to the UbiA prenyltransferase family. Mg(2+) serves as cofactor. As to expression, expressed in glandular trichomes called lupulin glands, and in early stage and mature cones. Detected in leaves, but not in root, stem and first stage of flowers. No expression in male flowers.

It is found in the plastid. It localises to the chloroplast membrane. It catalyses the reaction a 2-acylphloroglucinol + dimethylallyl diphosphate = a 2-acyl-4-prenylphloroglucinol + diphosphate. It functions in the pathway secondary metabolite biosynthesis. In terms of biological role, involved in the biosynthesis of prenylated phenolics natural products which contribute to the bitter taste of beer and display broad biological activities. Catalyzes the first prenylation step in the beta-bitter acid pathway. Abble to transfer dimethylallyl diphosphate (DMAPP) or geranyl diphosphate (GPP) to phlorisovalerophenone (PIVP), phlorisobutrylphenone (PIMP) and naringenin chalcone. Can also use phlorisobutyrophenone (PIBP) and phlormethylbutanophenone (PMBP) as substrates, but not 6'-O-methylated chalcone or naringenin. This Humulus lupulus (European hop) protein is 2-acylphloroglucinol 4-prenyltransferase, chloroplastic.